Here is a 120-residue protein sequence, read N- to C-terminus: Fluoride-specific ion channel FluC (120 aa).

The next 3 helical transmembrane spans lie at 30-50 (FGTLAVNILGSLLMGILYGLL), 66-86 (VGFLGALTTFSTFSMDSLLLL), and 96-116 (LNIILNVMVCIFMAWLGLQLV). 2 residues coordinate Na(+): Gly-70 and Thr-73.

The protein belongs to the fluoride channel Fluc/FEX (TC 1.A.43) family.

The protein resides in the cell inner membrane. It catalyses the reaction fluoride(in) = fluoride(out). Its activity is regulated as follows. Na(+) is not transported, but it plays an essential structural role and its presence is essential for fluoride channel function. In terms of biological role, fluoride-specific ion channel. Important for reducing fluoride concentration in the cell, thus reducing its toxicity. The chain is Fluoride-specific ion channel FluC from Pseudoalteromonas translucida (strain TAC 125).